The sequence spans 104 residues: Integration host factor subunit alpha (104 aa).

This sequence belongs to the bacterial histone-like protein family. Heterodimer of an alpha and a beta chain.

This protein is one of the two subunits of integration host factor, a specific DNA-binding protein that functions in genetic recombination as well as in transcriptional and translational control. The sequence is that of Integration host factor subunit alpha from Bartonella quintana (strain Toulouse) (Rochalimaea quintana).